The sequence spans 359 residues: sn-1 linoleoyl-lipid 6-desaturase (359 aa).

2 helical membrane passes run 45 to 65 (LIIV…PVIF) and 69 to 89 (LLGC…VGHD). Residues 88–92 (HDANH) carry the Histidine box-1 motif. The Histidine box-2 motif lies at 123-128 (HNYLHH). 3 consecutive transmembrane segments (helical) span residues 165–185 (IWGL…YLVL), 206–226 (LLGI…ALGF), and 231–251 (VLIG…TIFM). The Histidine box-3 signature appears at 306–310 (HHLFP).

This sequence belongs to the fatty acid desaturase type 2 family. Fe(2+) is required as a cofactor.

It is found in the membrane. It catalyses the reaction a 1-[(9Z,12Z)-octadecdienoyl]-2-acyl-glycerolipid + 2 reduced [2Fe-2S]-[ferredoxin] + O2 + 2 H(+) = a 1-[(6Z,9Z,12Z)-octadectrienoyl]-2-acyl-glycerolipid + 2 oxidized [2Fe-2S]-[ferredoxin] + 2 H2O. It participates in lipid metabolism; polyunsaturated fatty acid biosynthesis. Desaturase involved in fatty acid biosynthesis. Introduces a double bond at carbon 6 of linoleoyl group (18:2) attached to the sn-1 position of the glycerol moiety of membrane glycerolipids, leading to the formation of gamma-linolenic acid (GLA). This Synechocystis sp. (strain ATCC 27184 / PCC 6803 / Kazusa) protein is sn-1 linoleoyl-lipid 6-desaturase.